Here is a 386-residue protein sequence, read N- to C-terminus: Cell division protein FtsZ (386 aa).

GTP-binding positions include 20-24 (GGGGN), 107-109 (GTG), E138, R142, and N186. Residues 350 to 377 (LNQEQKTAAKAVNEQNAQGSKEPDYLDI) are disordered.

The protein belongs to the FtsZ family. In terms of assembly, homodimer. Polymerizes to form a dynamic ring structure in a strictly GTP-dependent manner. Interacts directly with several other division proteins.

It localises to the cytoplasm. Functionally, essential cell division protein that forms a contractile ring structure (Z ring) at the future cell division site. The regulation of the ring assembly controls the timing and the location of cell division. One of the functions of the FtsZ ring is to recruit other cell division proteins to the septum to produce a new cell wall between the dividing cells. Binds GTP and shows GTPase activity. The sequence is that of Cell division protein FtsZ from Sodalis glossinidius.